The primary structure comprises 671 residues: Talaropentaene synthase (671 aa).

Mg(2+) is bound at residue aspartate 92. The DDXXD 1 signature appears at 92–96 (DDMTD). The short motif at 223–231 (NDLYSYEKE) is the NSE/DTE element. 3 residues coordinate isopentenyl diphosphate: lysine 389, arginine 392, and histidine 421. Positions 428 and 432 each coordinate Mg(2+). The DDXXD 2 motif lies at 428–432 (DDIED). Position 437 (arginine 437) interacts with dimethylallyl diphosphate. Arginine 438 contacts isopentenyl diphosphate. Residues lysine 515, threonine 516, glutamine 551, asparagine 558, lysine 568, and lysine 578 each coordinate dimethylallyl diphosphate.

In the N-terminal section; belongs to the terpene synthase family. This sequence in the C-terminal section; belongs to the FPP/GGPP synthase family. Requires Mg(2+) as cofactor.

The enzyme catalyses 5 isopentenyl diphosphate + dimethylallyl diphosphate = all-trans-hexaprenyl diphosphate + 5 diphosphate. It carries out the reaction all-trans-hexaprenyl diphosphate = talaropentaene + diphosphate. Bifunctional terpene synthase that converts dimethylallyl diphosphate (DMAPP) and isopentenyl diphosphate (IPP) into talaropentaene as a single product. The C-terminal prenyltransferase (PT) domain of MpMS catalyzes formation of hexaprenyl diphosphate (HexPP), whereas the N-terminal terpene cyclase (TC) domain catalyzes the cyclization of HexPP to talaropentaene. This is Talaropentaene synthase from Talaromyces verruculosus (Penicillium verruculosum).